A 265-amino-acid chain; its full sequence is Type III pantothenate kinase (265 aa).

Asp-6 to Val-13 is a binding site for ATP. Substrate-binding positions include Tyr-100 and Gly-107 to Arg-110. The Proton acceptor role is filled by Asp-109. Asp-129 lines the K(+) pocket. An ATP-binding site is contributed by Thr-132. Thr-184 is a binding site for substrate.

This sequence belongs to the type III pantothenate kinase family. Homodimer. NH4(+) serves as cofactor. The cofactor is K(+).

The protein resides in the cytoplasm. The enzyme catalyses (R)-pantothenate + ATP = (R)-4'-phosphopantothenate + ADP + H(+). The protein operates within cofactor biosynthesis; coenzyme A biosynthesis; CoA from (R)-pantothenate: step 1/5. Its function is as follows. Catalyzes the phosphorylation of pantothenate (Pan), the first step in CoA biosynthesis. The sequence is that of Type III pantothenate kinase from Alkaliphilus oremlandii (strain OhILAs) (Clostridium oremlandii (strain OhILAs)).